A 72-amino-acid chain; its full sequence is Translation initiation factor IF-1 1 (72 aa).

One can recognise an S1-like domain in the interval 1-72 (MSKDDVIQMA…TRARIIFRAK (72 aa)).

The protein belongs to the IF-1 family. As to quaternary structure, component of the 30S ribosomal translation pre-initiation complex which assembles on the 30S ribosome in the order IF-2 and IF-3, IF-1 and N-formylmethionyl-tRNA(fMet); mRNA recruitment can occur at any time during PIC assembly.

It is found in the cytoplasm. In terms of biological role, one of the essential components for the initiation of protein synthesis. Stabilizes the binding of IF-2 and IF-3 on the 30S subunit to which N-formylmethionyl-tRNA(fMet) subsequently binds. Helps modulate mRNA selection, yielding the 30S pre-initiation complex (PIC). Upon addition of the 50S ribosomal subunit IF-1, IF-2 and IF-3 are released leaving the mature 70S translation initiation complex. This is Translation initiation factor IF-1 1 from Polynucleobacter asymbioticus (strain DSM 18221 / CIP 109841 / QLW-P1DMWA-1) (Polynucleobacter necessarius subsp. asymbioticus).